Here is a 567-residue protein sequence, read N- to C-terminus: Methionine--tRNA ligase (567 aa).

The short motif at 11–21 (PYVQTVPHLGN) is the 'HIGH' region element. Residues Cys143, Cys146, Cys156, and Cys159 each coordinate Zn(2+). Positions 331-335 (KFSKS) match the 'KMSKS' region motif. Lys334 lines the ATP pocket.

It belongs to the class-I aminoacyl-tRNA synthetase family. MetG type 1 subfamily. It depends on Zn(2+) as a cofactor.

The protein resides in the cytoplasm. It carries out the reaction tRNA(Met) + L-methionine + ATP = L-methionyl-tRNA(Met) + AMP + diphosphate. Functionally, is required not only for elongation of protein synthesis but also for the initiation of all mRNA translation through initiator tRNA(fMet) aminoacylation. The polypeptide is Methionine--tRNA ligase (Pyrobaculum islandicum (strain DSM 4184 / JCM 9189 / GEO3)).